The primary structure comprises 432 residues: MQLLTIGINHHTAPVALRERVAFPLEQIKPALVTFKNVFLGPQAPNAPEAAILSTCNRTELYCATDDRAARDAAIRWLSDYHRIPVDELAPHVYALPQSEAVRHAFRVASGLDSMVLGETQILGQMKDAVRTASEAGALGTYLNQLFQRTFAVAKEVRGTTEIGAQSVSMAAAAVRLAQRIFEKVSDQRVLFIGAGEMIELCATHFAAQGPRELVVANRTAERGQRLAERFNGRAMPLSDLPARMQEFDIIVSCTASTLPIIGLGAVERAVKARRHRPIFMVDLAVPRDIEPEVSKLKDVFLYTVDDLGAIVREGNASRQAAVAQAEAIIETRVQNFMQWLDTRSVVPVIRHMHTQADALRRLEVEKAQKMLARGDDPAAVLEALSQALTNKLIHGPTSALNRVNGADRDSLIELMRGFYQHAPRSNDQSGH.

Substrate contacts are provided by residues 55–58 (TCNR), S114, 119–121 (ETQ), and Q125. C56 serves as the catalytic Nucleophile. Residue 194-199 (GAGEMI) participates in NADP(+) binding.

This sequence belongs to the glutamyl-tRNA reductase family. Homodimer.

It catalyses the reaction (S)-4-amino-5-oxopentanoate + tRNA(Glu) + NADP(+) = L-glutamyl-tRNA(Glu) + NADPH + H(+). Its pathway is porphyrin-containing compound metabolism; protoporphyrin-IX biosynthesis; 5-aminolevulinate from L-glutamyl-tRNA(Glu): step 1/2. Catalyzes the NADPH-dependent reduction of glutamyl-tRNA(Glu) to glutamate 1-semialdehyde (GSA). This is Glutamyl-tRNA reductase from Burkholderia multivorans (strain ATCC 17616 / 249).